A 200-amino-acid chain; its full sequence is Recombination protein RecR (200 aa).

The C4-type zinc-finger motif lies at 58–75; that stretch reads CPTCFCLKSHPESVCSFC. A Toprim domain is found at 82 to 177; it reads SILCIVATPK…SVSRLALGLP (96 aa).

This sequence belongs to the RecR family.

In terms of biological role, may play a role in DNA repair. It seems to be involved in an RecBC-independent recombinational process of DNA repair. It may act with RecF and RecO. This Chlamydia abortus (strain DSM 27085 / S26/3) (Chlamydophila abortus) protein is Recombination protein RecR.